An 822-amino-acid polypeptide reads, in one-letter code: Sushi domain-containing protein 2 (822 aa).

The first 27 residues, 1 to 27 (MKPALLPWALLLLATALGPGPGPTADA), serve as a signal peptide directing secretion. Positions 28 to 66 (QESCSMRCGALDGPCSCHPTCSGLGTCCLDFRDFCLEIL) constitute an SMB domain. Topologically, residues 28 to 785 (QESCSMRCGA…PKCQPGRSYA (758 aa)) are extracellular. Intrachain disulfides connect Cys31–Cys35, Cys31–Cys44, Cys35–Cys62, Cys42–Cys44, Cys42–Cys55, Cys48–Cys54, and Cys55–Cys62. N-linked (GlcNAc...) asparagine glycans are attached at residues Asn162 and Asn177. Positions 285-433 (PVAWARTQCQ…PDCPRYMQRR (149 aa)) constitute an AMOP domain. The VWFD domain occupies 445-639 (RLASAFGDPH…NWTVHNASSL (195 aa)). The N-linked (GlcNAc...) asparagine glycan is linked to Asn522. Positions 723–780 (VSCGWLAPPPNGQKEGNRYLAGSTIYFHCDNGYSLAGAETSTCQADGTWSSPTPKCQP) constitute a Sushi domain. Intrachain disulfides connect Cys725–Cys765 and Cys751–Cys778. Residues 786 to 806 (VLLGIIFGGLAVVAAVALVYV) form a helical membrane-spanning segment. Residues 807–822 (LLRRRKGNTHVWGAQP) are Cytoplasmic-facing.

Interacts with LGALS1; leads to an increased amount of LGALS1 on the cell surface. Interacts with GPR15LG; the interaction is direct. In terms of tissue distribution, highly expressed in breast cancer, but shows a restricted expression pattern in normal tissues such as adipose, adrenal gland, kidney, lung, mammary gland, placenta, thyroid, trachea, and uterus. Also expressed in colon; down-regulated in colon cancer tissues.

Its subcellular location is the cell membrane. In terms of biological role, may be a cytokine receptor for GPR15LG. May be a tumor suppressor; together with GPR15LG has a growth inhibitory effect on colon cancer cells which includes G1 cell cycle arrest. May play a role in breast tumorigenesis. This Homo sapiens (Human) protein is Sushi domain-containing protein 2 (SUSD2).